We begin with the raw amino-acid sequence, 170 residues long: Small ribosomal subunit protein mS41 (170 aa).

A mitochondrion-targeting transit peptide spans 1 to 20 (MFRTLLSSTVRSIQLKPVTS).

The protein belongs to the mitochondrion-specific ribosomal protein mS41 family. Component of the mitochondrial small ribosomal subunit (mt-SSU).

The protein localises to the mitochondrion. In terms of biological role, component of the mitochondrial ribosome (mitoribosome), a dedicated translation machinery responsible for the synthesis of mitochondrial genome-encoded proteins, including at least some of the essential transmembrane subunits of the mitochondrial respiratory chain. The mitoribosomes are attached to the mitochondrial inner membrane and translation products are cotranslationally integrated into the membrane. mS41 is involved in telomere length regulation. This Candida albicans (strain SC5314 / ATCC MYA-2876) (Yeast) protein is Small ribosomal subunit protein mS41 (FYV4).